We begin with the raw amino-acid sequence, 162 residues long: NADH-quinone oxidoreductase subunit I (162 aa).

4Fe-4S ferredoxin-type domains follow at residues 52 to 82 (LRRY…IEAG) and 93 to 122 (TRYD…EGPN). [4Fe-4S] cluster contacts are provided by Cys62, Cys65, Cys68, Cys72, Cys102, Cys105, Cys108, and Cys112.

The protein belongs to the complex I 23 kDa subunit family. In terms of assembly, NDH-1 is composed of 14 different subunits. Subunits NuoA, H, J, K, L, M, N constitute the membrane sector of the complex. Requires [4Fe-4S] cluster as cofactor.

The protein resides in the cell inner membrane. It carries out the reaction a quinone + NADH + 5 H(+)(in) = a quinol + NAD(+) + 4 H(+)(out). In terms of biological role, NDH-1 shuttles electrons from NADH, via FMN and iron-sulfur (Fe-S) centers, to quinones in the respiratory chain. The immediate electron acceptor for the enzyme in this species is believed to be ubiquinone. Couples the redox reaction to proton translocation (for every two electrons transferred, four hydrogen ions are translocated across the cytoplasmic membrane), and thus conserves the redox energy in a proton gradient. This is NADH-quinone oxidoreductase subunit I from Azorhizobium caulinodans (strain ATCC 43989 / DSM 5975 / JCM 20966 / LMG 6465 / NBRC 14845 / NCIMB 13405 / ORS 571).